The following is a 221-amino-acid chain: Putative hemin import ATP-binding protein HrtA (221 aa).

Positions 3-221 (LVVKDIVKNF…IELEDGKITD (219 aa)) constitute an ABC transporter domain. 39–46 (GASGSGKT) contributes to the ATP binding site.

The protein belongs to the ABC transporter superfamily. HrtA family. In terms of assembly, the complex is composed of two ATP-binding proteins (HrtA), two transmembrane proteins (HrtB) and a solute-binding protein.

The protein resides in the cell membrane. Part of the ABC transporter complex hrt involved in hemin import. Responsible for energy coupling to the transport system. The chain is Putative hemin import ATP-binding protein HrtA (hrtA) from Staphylococcus aureus (strain MRSA252).